The sequence spans 143 residues: Nucleoside diphosphate kinase (143 aa).

Residues Lys-11, Phe-59, Arg-87, Thr-93, Arg-104, and Asn-114 each coordinate ATP. The active-site Pros-phosphohistidine intermediate is His-117.

Belongs to the NDK family. As to quaternary structure, homotetramer. Requires Mg(2+) as cofactor.

It is found in the cytoplasm. It catalyses the reaction a 2'-deoxyribonucleoside 5'-diphosphate + ATP = a 2'-deoxyribonucleoside 5'-triphosphate + ADP. It carries out the reaction a ribonucleoside 5'-diphosphate + ATP = a ribonucleoside 5'-triphosphate + ADP. Functionally, major role in the synthesis of nucleoside triphosphates other than ATP. The ATP gamma phosphate is transferred to the NDP beta phosphate via a ping-pong mechanism, using a phosphorylated active-site intermediate. This Alteromonas mediterranea (strain DSM 17117 / CIP 110805 / LMG 28347 / Deep ecotype) protein is Nucleoside diphosphate kinase.